Reading from the N-terminus, the 145-residue chain is MKAKHQRLILAVAALCGVAGAGVLAASALRDEAAYFRTPVEIAGGKAAVGEAMRLGGMVAKGSIVRQADGLTIRFVATDGQASVPVEYTGIVPDLFGEESGMIADGRMRADGTFVADRILAKHDERYMPPQMGEMPKNMKAAVEG.

At 1-7 (MKAKHQR) the chain is on the cytoplasmic side. The chain crosses the membrane as a helical; Signal-anchor for type II membrane protein span at residues 8–28 (LILAVAALCGVAGAGVLAASA). The Periplasmic segment spans residues 29-145 (LRDEAAYFRT…PKNMKAAVEG (117 aa)). 2 residues coordinate heme: His-123 and Tyr-127.

It belongs to the CcmE/CycJ family.

The protein resides in the cell inner membrane. In terms of biological role, heme chaperone required for the biogenesis of c-type cytochromes. Transiently binds heme delivered by CcmC and transfers the heme to apo-cytochromes in a process facilitated by CcmF and CcmH. In Sphingopyxis alaskensis (strain DSM 13593 / LMG 18877 / RB2256) (Sphingomonas alaskensis), this protein is Cytochrome c-type biogenesis protein CcmE.